Reading from the N-terminus, the 139-residue chain is Transcription antitermination protein NusB (139 aa).

The protein belongs to the NusB family.

In terms of biological role, involved in transcription antitermination. Required for transcription of ribosomal RNA (rRNA) genes. Binds specifically to the boxA antiterminator sequence of the ribosomal RNA (rrn) operons. The chain is Transcription antitermination protein NusB from Sodalis glossinidius (strain morsitans).